The following is a 336-amino-acid chain: MGNCLHQAELSPSTENSSQLNLEDLWNFSYDGNDSFPEIDYDASLEAAAPCHSCNLLDDSSLPFFILASVLGILASSTVLFLLFRPLFRWQLCPGWPVLAQLAVGSTLFSIVVPILAPGLGNTRSSAPCSLGYCVWYGSAFAQALLLGCHASLGPKLGAGQVPGLTLGLSVGLWGAAALLTLPITLASDASDGLCTPIYSTELKALQATHTVACFAIFVLLPLGLFGAKGLKKVLGMGPGPWMNILWVWFIFWWPHGVVLGLDFLVRSKLLLLPTCLAQQVLDLLLNLAEALAIVHCVATPLLLALFCHQATRTLVPSLPLPERWSSPVDTLGSKS.

Residues 1–63 (MGNCLHQAEL…CNLLDDSSLP (63 aa)) are Extracellular-facing. N-linked (GlcNAc...) asparagine glycans are attached at residues Asn16, Asn27, and Asn33. 2 cysteine pairs are disulfide-bonded: Cys51/Cys276 and Cys129/Cys195. Residues 64–84 (FFILASVLGILASSTVLFLLF) traverse the membrane as a helical segment. Over 85-95 (RPLFRWQLCPG) the chain is Cytoplasmic. A helical transmembrane segment spans residues 96 to 116 (WPVLAQLAVGSTLFSIVVPIL). Over 117–129 (APGLGNTRSSAPC) the chain is Extracellular. Residues 130–153 (SLGYCVWYGSAFAQALLLGCHASL) form a helical membrane-spanning segment. Over 154 to 166 (GPKLGAGQVPGLT) the chain is Cytoplasmic. A helical membrane pass occupies residues 167–187 (LGLSVGLWGAAALLTLPITLA). Residues 188 to 207 (SDASDGLCTPIYSTELKALQ) lie on the Extracellular side of the membrane. A helical transmembrane segment spans residues 208 to 228 (ATHTVACFAIFVLLPLGLFGA). The Cytoplasmic segment spans residues 229 to 244 (KGLKKVLGMGPGPWMN). The chain crosses the membrane as a helical span at residues 245-265 (ILWVWFIFWWPHGVVLGLDFL). The Extracellular portion of the chain corresponds to 266-287 (VRSKLLLLPTCLAQQVLDLLLN). Residues 288–308 (LAEALAIVHCVATPLLLALFC) form a helical membrane-spanning segment. The Cytoplasmic portion of the chain corresponds to 309–336 (HQATRTLVPSLPLPERWSSPVDTLGSKS).

The protein belongs to the G-protein coupled receptor 1 family. Atypical chemokine receptor subfamily.

The protein resides in the early endosome. It is found in the recycling endosome. The protein localises to the membrane. In terms of biological role, atypical chemokine receptor that controls chemokine levels and localization via high-affinity chemokine binding that is uncoupled from classic ligand-driven signal transduction cascades, resulting instead in chemokine sequestration, degradation, or transcytosis. Also known as interceptor (internalizing receptor) or chemokine-scavenging receptor or chemokine decoy receptor. Has a promiscuous chemokine-binding profile, interacting with inflammatory chemokines of both the CXC and the CC subfamilies but not with homeostatic chemokines. Acts as a receptor for chemokines including CCL2, CCL5, CCL7, CCL11, CCL13, CCL14, CCL17, CXCL5, CXCL6, IL8/CXCL8, CXCL11, GRO, RANTES, MCP-1 and TARC. May regulate chemokine bioavailability and, consequently, leukocyte recruitment through two distinct mechanisms: when expressed in endothelial cells, it sustains the abluminal to luminal transcytosis of tissue-derived chemokines and their subsequent presentation to circulating leukocytes; when expressed in erythrocytes, serves as blood reservoir of cognate chemokines but also as a chemokine sink, buffering potential surges in plasma chemokine levels. The protein is Atypical chemokine receptor 1 (ACKR1) of Saguinus imperator (Emperor tamarin).